The following is a 342-amino-acid chain: Cytochrome f (342 aa).

The N-terminal stretch at 1-28 is a signal peptide; that stretch reads MKKQWIAGAFGLTAALAGLVSVPQSALA. Positions 48, 51, and 52 each coordinate heme. Residues 305–325 traverse the membrane as a helical segment; sequence VTWLVAFLAAAFICQLLLVLK.

Belongs to the cytochrome f family. The 4 large subunits of the cytochrome b6-f complex are cytochrome b6, subunit IV (17 kDa polypeptide, PetD), cytochrome f and the Rieske protein, while the 4 small subunits are PetG, PetL, PetM and PetN. The complex functions as a dimer. Heme is required as a cofactor.

It is found in the cell inner membrane. Its function is as follows. Component of the cytochrome b6-f complex, which mediates electron transfer between photosystem II (PSII) and photosystem I (PSI), cyclic electron flow around PSI, and state transitions. In Gloeobacter violaceus (strain ATCC 29082 / PCC 7421), this protein is Cytochrome f (petA).